The sequence spans 207 residues: Cytochrome c biogenesis ATP-binding export protein CcmA (207 aa).

In terms of domain architecture, ABC transporter spans Leu2 to Gly204. Gly34 to Thr41 contributes to the ATP binding site.

Belongs to the ABC transporter superfamily. CcmA exporter (TC 3.A.1.107) family. The complex is composed of two ATP-binding proteins (CcmA) and two transmembrane proteins (CcmB).

It localises to the cell inner membrane. It carries out the reaction heme b(in) + ATP + H2O = heme b(out) + ADP + phosphate + H(+). In terms of biological role, part of the ABC transporter complex CcmAB involved in the biogenesis of c-type cytochromes; once thought to export heme, this seems not to be the case, but its exact role is uncertain. Responsible for energy coupling to the transport system. The chain is Cytochrome c biogenesis ATP-binding export protein CcmA from Vibrio cholerae serotype O1 (strain ATCC 39315 / El Tor Inaba N16961).